A 227-amino-acid polypeptide reads, in one-letter code: Cytochrome c oxidase subunit 2 (227 aa).

At 1–14 the chain is on the mitochondrial intermembrane side; that stretch reads MAYPFQLGFQDATS. Residues 15-45 traverse the membrane as a helical segment; that stretch reads PIMEELLHFHDHALMIVFLISSLVLYLISVM. The Mitochondrial matrix segment spans residues 46–59; that stretch reads LTTSLTHTSTMDAQ. Residues 60 to 87 form a helical membrane-spanning segment; it reads EVETIWTILPAMILIMIALPSLRILYMM. The Mitochondrial intermembrane portion of the chain corresponds to 88-227; sequence DEINNPYLTV…YFEKWSSSML (140 aa). 6 residues coordinate Cu cation: H161, C196, E198, C200, H204, and M207. E198 is a Mg(2+) binding site. A Phosphotyrosine modification is found at Y218.

The protein belongs to the cytochrome c oxidase subunit 2 family. Component of the cytochrome c oxidase (complex IV, CIV), a multisubunit enzyme composed of 14 subunits. The complex is composed of a catalytic core of 3 subunits MT-CO1, MT-CO2 and MT-CO3, encoded in the mitochondrial DNA, and 11 supernumerary subunits COX4I, COX5A, COX5B, COX6A, COX6B, COX6C, COX7A, COX7B, COX7C, COX8 and NDUFA4, which are encoded in the nuclear genome. The complex exists as a monomer or a dimer and forms supercomplexes (SCs) in the inner mitochondrial membrane with NADH-ubiquinone oxidoreductase (complex I, CI) and ubiquinol-cytochrome c oxidoreductase (cytochrome b-c1 complex, complex III, CIII), resulting in different assemblies (supercomplex SCI(1)III(2)IV(1) and megacomplex MCI(2)III(2)IV(2)). Found in a complex with TMEM177, COA6, COX18, COX20, SCO1 and SCO2. Interacts with TMEM177 in a COX20-dependent manner. Interacts with COX20. Interacts with COX16. The cofactor is Cu cation.

The protein resides in the mitochondrion inner membrane. The catalysed reaction is 4 Fe(II)-[cytochrome c] + O2 + 8 H(+)(in) = 4 Fe(III)-[cytochrome c] + 2 H2O + 4 H(+)(out). Functionally, component of the cytochrome c oxidase, the last enzyme in the mitochondrial electron transport chain which drives oxidative phosphorylation. The respiratory chain contains 3 multisubunit complexes succinate dehydrogenase (complex II, CII), ubiquinol-cytochrome c oxidoreductase (cytochrome b-c1 complex, complex III, CIII) and cytochrome c oxidase (complex IV, CIV), that cooperate to transfer electrons derived from NADH and succinate to molecular oxygen, creating an electrochemical gradient over the inner membrane that drives transmembrane transport and the ATP synthase. Cytochrome c oxidase is the component of the respiratory chain that catalyzes the reduction of oxygen to water. Electrons originating from reduced cytochrome c in the intermembrane space (IMS) are transferred via the dinuclear copper A center (CU(A)) of subunit 2 and heme A of subunit 1 to the active site in subunit 1, a binuclear center (BNC) formed by heme A3 and copper B (CU(B)). The BNC reduces molecular oxygen to 2 water molecules using 4 electrons from cytochrome c in the IMS and 4 protons from the mitochondrial matrix. This Rousettus leschenaultii (Leschenault's rousette) protein is Cytochrome c oxidase subunit 2 (MT-CO2).